Here is a 343-residue protein sequence, read N- to C-terminus: Heat-inducible transcription repressor HrcA (343 aa).

This sequence belongs to the HrcA family.

In terms of biological role, negative regulator of class I heat shock genes (grpE-dnaK-dnaJ and groELS operons). Prevents heat-shock induction of these operons. This chain is Heat-inducible transcription repressor HrcA, found in Halalkalibacterium halodurans (strain ATCC BAA-125 / DSM 18197 / FERM 7344 / JCM 9153 / C-125) (Bacillus halodurans).